Here is a 336-residue protein sequence, read N- to C-terminus: Heme A synthase (336 aa).

5 helical membrane passes run 5-25, 92-112, 117-137, 153-173, and 191-211; these read LTRW…VGGI, GRAT…KGII, ILSY…GWYM, LAFH…KLVK, and LIFS…GALV. H255 contacts heme. 3 helical membrane passes run 257–277, 284–304, and 307–327; these read LGAY…LKVK, VAFY…ITLL, and VPII…SVVI. Residue H315 participates in heme binding.

The protein belongs to the COX15/CtaA family. Type 2 subfamily. As to quaternary structure, interacts with CtaB. Heme b serves as cofactor.

The protein localises to the cell membrane. It carries out the reaction Fe(II)-heme o + 2 A + H2O = Fe(II)-heme a + 2 AH2. Its pathway is porphyrin-containing compound metabolism; heme A biosynthesis; heme A from heme O: step 1/1. In terms of biological role, catalyzes the conversion of heme O to heme A by two successive hydroxylations of the methyl group at C8. The first hydroxylation forms heme I, the second hydroxylation results in an unstable dihydroxymethyl group, which spontaneously dehydrates, resulting in the formyl group of heme A. The protein is Heme A synthase of Rickettsia bellii (strain OSU 85-389).